The primary structure comprises 530 residues: Histone-arginine methyltransferase CARMER (530 aa).

The SAM-dependent MTase PRMT-type domain occupies 141 to 450 (ASQYFQFYGY…QSYDVTIDLH (310 aa)). Glutamine 154, arginine 163, glycine 187, glutamate 209, glutamate 238, and threonine 266 together coordinate S-adenosyl-L-methionine. Residue arginine 501 is modified to Asymmetric dimethylarginine; by autocatalysis.

The protein belongs to the class I-like SAM-binding methyltransferase superfamily. Protein arginine N-methyltransferase family. In terms of assembly, homodimer. The dimethylated protein is the major form.

It is found in the cytoplasm. It localises to the nucleus. It catalyses the reaction L-arginyl-[protein] + 2 S-adenosyl-L-methionine = N(omega),N(omega)-dimethyl-L-arginyl-[protein] + 2 S-adenosyl-L-homocysteine + 2 H(+). In terms of biological role, methylates (mono- and asymmetric dimethylation) the guanidino nitrogens of arginyl residues in proteins. May methylate histone H3 at 'Arg-17' and activate transcription via chromatin remodeling. This Drosophila erecta (Fruit fly) protein is Histone-arginine methyltransferase CARMER (Art4).